A 623-amino-acid polypeptide reads, in one-letter code: Heterogeneous nuclear ribonucleoprotein Q (623 aa).

At alanine 2 the chain carries N-acetylalanine. Serine 159 bears the Phosphoserine mark. 3 consecutive RRM domains span residues 162 to 241 (TEIF…ISVA), 243 to 325 (NRLF…WADP), and 338 to 408 (KVLF…FAKP). A Glycyl lysine isopeptide (Lys-Gly) (interchain with G-Cter in SUMO2) cross-link involves residue lysine 168. Residue lysine 221 is modified to N6-acetyllysine. N6-acetyllysine is present on lysine 363. A Phosphotyrosine modification is found at tyrosine 373. An interaction with APOBEC1 region spans residues 400–561 (NIEIVFAKPP…GARGGRGGNV (162 aa)). At arginine 444 the chain carries Asymmetric dimethylarginine; by PRMT1; alternate. The residue at position 444 (arginine 444) is an Omega-N-methylarginine; by PRMT1; alternate. A run of 6 repeats spans residues 448–450 (RGG), 451–453 (RGG), 460–464 (YYGYE), 469–472 (YYGY), 478–480 (RGG), and 485–488 (YYGY). The tract at residues 448–559 (RGGRGGYGYP…VRGARGGRGG (112 aa)) is 8 X 3 AA repeats of R-G-G. The segment at 460–488 (YYGYEDYYDYYGYDYHNYRGGYEDPYYGY) is 3 X 4 AA repeats of Y-Y-G-Y. An Omega-N-methylarginine; by PRMT1 modification is found at arginine 496. A disordered region spans residues 497–623 (GRGGRGARGA…YQDTFGQQWK (127 aa)). The 1-4 repeat unit spans residues 498-500 (RGG). Low complexity predominate over residues 504 to 522 (RGAAPSRGRGAAPPRGRAG). Arginine 510 carries the post-translational modification Asymmetric dimethylarginine; by PRMT1. Arginine 518 is modified (asymmetric dimethylarginine; by PRMT1; alternate). At arginine 518 the chain carries Omega-N-methylarginine; by PRMT1; alternate. The interval 518–549 (RGRAGYSQRGGPGSARGVRGARGGAQQQRGRG) is interaction with SMN. Arginine 526 carries the post-translational modification Asymmetric dimethylarginine; alternate. Arginine 526 is modified (omega-N-methylarginine; alternate). Residues 526 to 528 (RGG) form a 1-5 repeat. An asymmetric dimethylarginine; by PRMT1; alternate mark is found at arginine 536 and arginine 539. 2 positions are modified to omega-N-methylarginine; by PRMT1; alternate: arginine 536 and arginine 539. 3 consecutive repeat copies span residues 539 to 541 (RGG), 554 to 556 (RGG), and 557 to 559 (RGG). Gly residues predominate over residues 550–562 (VRGARGGRGGNVG). Positions 564–578 (KRKADGYNQPDTKRR) match the Bipartite nuclear localization signal motif. Over residues 580–595 (TNNQNWGSQPIAQQPL) the composition is skewed to polar residues. Serine 587 is modified (phosphoserine). Lysine 607 is covalently cross-linked (Glycyl lysine isopeptide (Lys-Gly) (interchain with G-Cter in SUMO2)). Over residues 611-623 (QEFYQDTFGQQWK) the composition is skewed to polar residues.

As to quaternary structure, identified in the spliceosome C complex. Component of the coding region determinant (CRD)-mediated complex, composed of DHX9, HNRNPU, IGF2BP1, SYNCRIP and YBX1. Identified in a mRNP complex, at least composed of DHX9, DDX3X, ELAVL1, HNRNPU, IGF2BP1, ILF3, PABPC1, PCBP2, PTBP2, STAU1, STAU2, SYNCRIP and YBX1. Identified in a mRNP granule complex, at least composed of ACTB, ACTN4, DHX9, ERG, HNRNPA1, HNRNPA2B1, HNRNPAB, HNRNPD, HNRNPL, HNRNPR, HNRNPU, HSPA1, HSPA8, IGF2BP1, ILF2, ILF3, NCBP1, NCL, PABPC1, PABPC4, PABPN1, RPLP0, RPS3, RPS3A, RPS4X, RPS8, RPS9, SYNCRIP, YBX1 and untranslated mRNAs. Interacts with GTPBP1. Isoform 1 is a component of the APOB mRNA editosome complex. Isoform 1 interacts with APOBEC1 and A1CF. Part of a complex associated with the FOS mCRD domain and consisting of PABPC1, PAIP1, CSDE1/UNR, HNRPD and SYNCRIP. Isoform 2 interacts with HNRPR. Interacts with POLR2A hyperphosphorylated C-terminal domain. Interacts with HABP4. Identified in a histone pre-mRNA complex, at least composed of ERI1, LSM11, SLBP, SNRPB, SYNCRIP and YBX1. Isoform 1 and isoform 2 interact with SMN. Isoform 2 interacts through its C-terminal domain with SYT7, SYT8 and SYT9. The non-phosphorylated and phosphorylated forms are colocalized with PAIP1 in polysomes. In terms of processing, phosphorylated on tyrosine. The membrane-bound form found in microsomes is phosphorylated in vitro by insulin receptor tyrosine kinase (INSR). Phosphorylation is inhibited upon binding to RNA, whereas the cytoplasmic form is poorly phosphorylated. In terms of tissue distribution, ubiquitous. Detected in heart, brain, spleen, lung, liver, skeletal muscle, adipocytes, kidney and testis.

Its subcellular location is the nucleus. The protein resides in the nucleoplasm. It localises to the microsome. The protein localises to the cytoplasm. Heterogeneous nuclear ribonucleoprotein (hnRNP) implicated in mRNA processing mechanisms. Component of the CRD-mediated complex that promotes MYC mRNA stability. Isoform 1 and isoform 2 are associated in vitro with pre-mRNA, splicing intermediates and mature mRNA protein complexes. Isoform 1 binds to apoB mRNA AU-rich sequences. Isoform 1 is part of the APOB mRNA editosome complex and may modulate the postranscriptional C to U RNA-editing of the APOB mRNA through either by binding to A1CF (APOBEC1 complementation factor), to APOBEC1 or to RNA itself. May be involved in translationally coupled mRNA turnover. Implicated with other RNA-binding proteins in the cytoplasmic deadenylation/translational and decay interplay of the FOS mRNA mediated by the major coding-region determinant of instability (mCRD) domain. Interacts in vitro preferentially with poly(A) and poly(U) RNA sequences. Isoform 2 may be involved in cytoplasmic vesicle-based mRNA transport through interaction with synaptotagmins. This Mus musculus (Mouse) protein is Heterogeneous nuclear ribonucleoprotein Q (Syncrip).